A 111-amino-acid chain; its full sequence is Large ribosomal subunit protein uL22 (111 aa).

This sequence belongs to the universal ribosomal protein uL22 family. Part of the 50S ribosomal subunit.

Its function is as follows. This protein binds specifically to 23S rRNA; its binding is stimulated by other ribosomal proteins, e.g. L4, L17, and L20. It is important during the early stages of 50S assembly. It makes multiple contacts with different domains of the 23S rRNA in the assembled 50S subunit and ribosome. Functionally, the globular domain of the protein is located near the polypeptide exit tunnel on the outside of the subunit, while an extended beta-hairpin is found that lines the wall of the exit tunnel in the center of the 70S ribosome. In Clostridium perfringens (strain ATCC 13124 / DSM 756 / JCM 1290 / NCIMB 6125 / NCTC 8237 / Type A), this protein is Large ribosomal subunit protein uL22.